The sequence spans 662 residues: MDSSTWSPATTATTEPLKPHERIRNAADISVIVIYFVVVMAVGLWAMCSTNRGTVGGFFLAGRSMVWWPVGASLFASNIGSGHFVGLAGTGAAAGIATGGFEWNALIWVVVLGWLFVPIYIKAGVVTMPEYLRKRFGGKRIQVYLSILSLMLYIFTKISADIFSGAIFITLALGLDLYLAIFLLLAITGLYTITGGLAAVIYTDTLQTAIMLVGSFILTGFAFHEVGGYDAFMEKYMNAIPTVISDGNITIKKECYTPRADSFHIFRDPLKGDLPWPGLTFGLSILALWYWCTDQVIVQRCLSAKNMSHVKAGCVMCGYFKLLPMFVIVMPGMISRVLYTEKIACTVPSECEKYCGTKVGCSNIAYPTLVVELMPNGLRGLMLSVMLASLMSSLTSIFNSASTLFTMDVYTKIRKRASEKELMIAGRLFILVLIGISIAWVPIVQSAQSGQLFDYIQSVTSYLGPPIAAVFLLAIFCKRVNEEGAFWGLVIGCMIGLARMITEFAYGTGSCVEPSNCPTIICGVHYLYFAIILFVISIIIVLVVSLFTKPIPDVHLYRLCWSLRNSKEERIDLDAEEEDIQEAPEETIEIEVPEEKKGCFRRTYDLFCGLDQQKGPKMTKEEEAAMKLKMTDTSEKPLWRTVVNINGIILLTVAVFCHAYFA.

Residues 1 to 24 (MDSSTWSPATTATTEPLKPHERIR) are Extracellular-facing. A helical membrane pass occupies residues 25–47 (NAADISVIVIYFVVVMAVGLWAM). Residues 48-66 (CSTNRGTVGGFFLAGRSMV) lie on the Cytoplasmic side of the membrane. Residues 67–90 (WWPVGASLFASNIGSGHFVGLAGT) form a helical membrane-spanning segment. The Extracellular segment spans residues 91-95 (GAAAG). Residues 96 to 117 (IATGGFEWNALIWVVVLGWLFV) traverse the membrane as a helical segment. The Cytoplasmic portion of the chain corresponds to 118-139 (PIYIKAGVVTMPEYLRKRFGGK). Residues 140–169 (RIQVYLSILSLMLYIFTKISADIFSGAIFI) traverse the membrane as a helical segment. The Extracellular segment spans residues 170–176 (TLALGLD). The chain crosses the membrane as a helical span at residues 177 to 193 (LYLAIFLLLAITGLYTI). Residues 194–202 (TGGLAAVIY) lie on the Cytoplasmic side of the membrane. A helical membrane pass occupies residues 203–221 (TDTLQTAIMLVGSFILTGF). The Extracellular segment spans residues 222 to 275 (AFHEVGGYDAFMEKYMNAIPTVISDGNITIKKECYTPRADSFHIFRDPLKGDLP). Residue asparagine 248 is glycosylated (N-linked (GlcNAc...) asparagine). Intrachain disulfides connect cysteine 255-cysteine 511, cysteine 255-cysteine 608, cysteine 345-cysteine 351, cysteine 355-cysteine 361, and cysteine 517-cysteine 522. Residues 276–295 (WPGLTFGLSILALWYWCTDQ) form a helical membrane-spanning segment. Topologically, residues 296 to 309 (VIVQRCLSAKNMSH) are cytoplasmic. Residues 310 to 331 (VKAGCVMCGYFKLLPMFVIVMP) traverse the membrane as a helical segment. Topologically, residues 332–375 (GMISRVLYTEKIACTVPSECEKYCGTKVGCSNIAYPTLVVELMP) are extracellular. The chain crosses the membrane as a helical span at residues 376–406 (NGLRGLMLSVMLASLMSSLTSIFNSASTLFT). At 407-422 (MDVYTKIRKRASEKEL) the chain is on the cytoplasmic side. The helical transmembrane segment at 423 to 444 (MIAGRLFILVLIGISIAWVPIV) threads the bilayer. Over 445-451 (QSAQSGQ) the chain is Extracellular. Residues 452–477 (LFDYIQSVTSYLGPPIAAVFLLAIFC) form a helical membrane-spanning segment. The Cytoplasmic portion of the chain corresponds to 478 to 481 (KRVN). Residues 482–504 (EEGAFWGLVIGCMIGLARMITEF) traverse the membrane as a helical segment. Over 505–525 (AYGTGSCVEPSNCPTIICGVH) the chain is Extracellular. A helical transmembrane segment spans residues 526-547 (YLYFAIILFVISIIIVLVVSLF). Over 548–642 (TKPIPDVHLY…TSEKPLWRTV (95 aa)) the chain is Cytoplasmic. Phosphothreonine is present on threonine 587. Residues 643 to 660 (VNINGIILLTVAVFCHAY) form a helical membrane-spanning segment. The Extracellular segment spans residues 661–662 (FA).

The protein belongs to the sodium:solute symporter (SSF) (TC 2.A.21) family. In terms of processing, N-glycosylation is not necessary for the cotransporter function.

The protein localises to the apical cell membrane. It carries out the reaction D-glucose(out) + 2 Na(+)(out) = D-glucose(in) + 2 Na(+)(in). The enzyme catalyses D-galactose(out) + 2 Na(+)(out) = D-galactose(in) + 2 Na(+)(in). Its activity is regulated as follows. Enhanced by the interaction with PDZK1IP1/MAP17; but unlike SLC5A2/SGLT2, PDZK1IP1 is not essential for SLC5A1 transporter activity. Possibly modulated by cholesterol binding. Its function is as follows. Electrogenic Na(+)-coupled sugar symporter that actively transports D-glucose or D-galactose at the plasma membrane, with a Na(+) to sugar coupling ratio of 2:1. Transporter activity is driven by a transmembrane Na(+) electrochemical gradient set by the Na(+)/K(+) pump. Has a primary role in the transport of dietary monosaccharides from enterocytes to blood. Responsible for the absorption of D-glucose or D-galactose across the apical brush-border membrane of enterocytes, whereas basolateral exit is provided by GLUT2. Additionally, functions as a D-glucose sensor in enteroendocrine cells, triggering the secretion of the incretins GCG and GIP that control food intake and energy homeostasis. Together with SGLT2, functions in reabsorption of D-glucose from glomerular filtrate, playing a nonredundant role in the S3 segment of the proximal tubules. Transports D-glucose into endometrial epithelial cells, controlling glycogen synthesis and nutritional support for the embryo as well as the decidual transformation of endometrium prior to conception. Acts as a water channel enabling passive water transport in response to the osmotic gradient created upon sugar and Na(+) uptake. Has high water conductivity comparable to aquaporins and therefore is expected to play an important role in transepithelial water permeability, especially in the small intestine. The polypeptide is Sodium/glucose cotransporter 1 (SLC5A1) (Sus scrofa (Pig)).